The following is a 331-amino-acid chain: 6-phosphogluconolactonase (331 aa).

The protein belongs to the cycloisomerase 2 family.

The enzyme catalyses 6-phospho-D-glucono-1,5-lactone + H2O = 6-phospho-D-gluconate + H(+). It functions in the pathway carbohydrate degradation; pentose phosphate pathway; D-ribulose 5-phosphate from D-glucose 6-phosphate (oxidative stage): step 2/3. Functionally, catalyzes the hydrolysis of 6-phosphogluconolactone to 6-phosphogluconate. This chain is 6-phosphogluconolactonase, found in Enterobacter sp. (strain 638).